A 712-amino-acid polypeptide reads, in one-letter code: Patatin-like phospholipase domain-containing protein NFIA_019760 (712 aa).

Residues 1–13 (MTSDEKSATRDIY) are compositionally biased toward basic and acidic residues. Residues 1–21 (MTSDEKSATRDIYDPNTLPDY) form a disordered region. The chain crosses the membrane as a helical span at residues 85-105 (WPFLFTVFAWITVLGFAYTLT). A PNPLA domain is found at 275-466 (LCLSGGATFA…RTDIPIKALN (192 aa)). The GXSXG signature appears at 306-310 (GTSGG). S308 serves as the catalytic Nucleophile. The Proton acceptor role is filled by D453. Residues 628–687 (RRRQDRAEEHADRMVERLDQSFPERQSDYKDESHYTEVSDSLSATSSRPHTPDARRSSMF) form a disordered region. 2 stretches are compositionally biased toward basic and acidic residues: residues 632–646 (DRAE…ERLD) and 652–664 (RQSD…HYTE). The segment covering 665-676 (VSDSLSATSSRP) has biased composition (polar residues). The span at 677-687 (HTPDARRSSMF) shows a compositional bias: basic and acidic residues.

Belongs to the PLPL family.

The protein localises to the membrane. In terms of biological role, probable lipid hydrolase. The chain is Patatin-like phospholipase domain-containing protein NFIA_019760 from Neosartorya fischeri (strain ATCC 1020 / DSM 3700 / CBS 544.65 / FGSC A1164 / JCM 1740 / NRRL 181 / WB 181) (Aspergillus fischerianus).